The chain runs to 236 residues: Mitochondrial coenzyme A diphosphatase NUDT8 (236 aa).

The 148-residue stretch at 25 to 172 (LRARPASAAV…HFRYTLPVFL (148 aa)) folds into the Nudix hydrolase domain. The residue at position 70 (Lys-70) is an N6-succinyllysine. Positions 70–91 (KCDPADQDVVHTALRETREELG) match the Nudix box motif. The Mg(2+) site is built by Glu-85 and Glu-89.

This sequence belongs to the Nudix hydrolase family. As to quaternary structure, monomer. Requires Mg(2+) as cofactor. It depends on Mn(2+) as a cofactor.

Its subcellular location is the mitochondrion. The enzyme catalyses an acyl-CoA + H2O = an acyl-4'-phosphopantetheine + adenosine 3',5'-bisphosphate + 2 H(+). It catalyses the reaction CoA + H2O = (R)-4'-phosphopantetheine + adenosine 3',5'-bisphosphate + 2 H(+). It carries out the reaction acetyl-CoA + H2O = S-acetyl-4'-phosphopantetheine + adenosine 3',5'-bisphosphate + 2 H(+). The catalysed reaction is butanoyl-CoA + H2O = S-butanoyl-4'-phosphopantetheine + adenosine 3',5'-bisphosphate + 2 H(+). The enzyme catalyses hexanoyl-CoA + H2O = hexanoyl-4'-phosphopantetheine + adenosine 3',5'-bisphosphate + 2 H(+). It catalyses the reaction octanoyl-CoA + H2O = S-octanoyl-4'-phosphopantetheine + adenosine 3',5'-bisphosphate + 2 H(+). It carries out the reaction propanoyl-CoA + H2O = propanoyl-4'-phosphopantetheine + adenosine 3',5'-bisphosphate + 2 H(+). The catalysed reaction is malonyl-CoA + H2O = malonyl-4'-phosphopantetheine + adenosine 3',5'-bisphosphate + 2 H(+). The enzyme catalyses succinyl-CoA + H2O = succinyl-4'-phosphopantetheine + adenosine 3',5'-bisphosphate + 2 H(+). It catalyses the reaction a 5'-end CoA-ribonucleoside in mRNA + H2O = a 5'-end phospho-adenosine-phospho-ribonucleoside in mRNA + (R)-4'-phosphopantetheine + 2 H(+). Functionally, acyl-CoA diphosphatase that mediates the hydrolysis of a wide range of CoA and CoA esters yielding 3',5'-ADP and the corresponding 4'-phosphopantetheine derivative as products. Hydrolyzes short- and medium-chain acyl-CoAs, exhibiting the highest activity toward free CoA, hexanoyl-CoA, and octanoyl-CoA and the lowest activity against acetyl-CoA. Exhibits decapping activity towards dpCoA-capped RNAs in vitro. The chain is Mitochondrial coenzyme A diphosphatase NUDT8 (NUDT8) from Homo sapiens (Human).